Here is a 114-residue protein sequence, read N- to C-terminus: Non-specific lipid-transfer protein 2 (114 aa).

A signal peptide spans 1 to 23 (MEMVNKIACFVLLCMVVVAPHAE). Disulfide bonds link Cys-27–Cys-73, Cys-37–Cys-50, Cys-51–Cys-96, and Cys-71–Cys-110.

The protein belongs to the plant LTP family.

Plant non-specific lipid-transfer proteins transfer phospholipids as well as galactolipids across membranes. May play a role in wax or cutin deposition in the cell walls of expanding epidermal cells and certain secretory tissues. The protein is Non-specific lipid-transfer protein 2 of Solanum chilense (Tomato).